Reading from the N-terminus, the 203-residue chain is Probable flagellin 1 (203 aa).

A propeptide spanning residues 1-11 is cleaved from the precursor; it reads MGMRFLKNEKG.

Belongs to the archaeal flagellin family.

Its subcellular location is the archaeal flagellum. Functionally, flagellin is the subunit protein which polymerizes to form the filaments of archaeal flagella. The chain is Probable flagellin 1 (flaB1) from Archaeoglobus fulgidus (strain ATCC 49558 / DSM 4304 / JCM 9628 / NBRC 100126 / VC-16).